We begin with the raw amino-acid sequence, 150 residues long: Large ribosomal subunit protein uL15 (150 aa).

This sequence belongs to the universal ribosomal protein uL15 family. In terms of assembly, part of the 50S ribosomal subunit.

Functionally, binds to the 23S rRNA. This is Large ribosomal subunit protein uL15 from Rickettsia typhi (strain ATCC VR-144 / Wilmington).